Consider the following 244-residue polypeptide: 7-cyano-7-deazaguanine synthase (244 aa).

17 to 27 provides a ligand contact to ATP; it reads FSGGQDSTTCL. Zn(2+) contacts are provided by Cys-205, Cys-220, Cys-223, and Cys-226.

This sequence belongs to the QueC family. Zn(2+) serves as cofactor.

The enzyme catalyses 7-carboxy-7-deazaguanine + NH4(+) + ATP = 7-cyano-7-deazaguanine + ADP + phosphate + H2O + H(+). Its pathway is purine metabolism; 7-cyano-7-deazaguanine biosynthesis. Its function is as follows. Catalyzes the ATP-dependent conversion of 7-carboxy-7-deazaguanine (CDG) to 7-cyano-7-deazaguanine (preQ(0)). In Bordetella parapertussis (strain 12822 / ATCC BAA-587 / NCTC 13253), this protein is 7-cyano-7-deazaguanine synthase.